Here is a 1211-residue protein sequence, read N- to C-terminus: DNA-directed RNA polymerase subunit beta' (1211 aa).

Zn(2+)-binding residues include cysteine 60, cysteine 62, cysteine 75, and cysteine 78. Mg(2+) contacts are provided by aspartate 449, aspartate 451, and aspartate 453. 4 residues coordinate Zn(2+): cysteine 818, cysteine 892, cysteine 899, and cysteine 902.

This sequence belongs to the RNA polymerase beta' chain family. The RNAP catalytic core consists of 2 alpha, 1 beta, 1 beta' and 1 omega subunit. When a sigma factor is associated with the core the holoenzyme is formed, which can initiate transcription. The cofactor is Mg(2+). Zn(2+) serves as cofactor.

It carries out the reaction RNA(n) + a ribonucleoside 5'-triphosphate = RNA(n+1) + diphosphate. DNA-dependent RNA polymerase catalyzes the transcription of DNA into RNA using the four ribonucleoside triphosphates as substrates. In Limosilactobacillus reuteri (strain DSM 20016) (Lactobacillus reuteri), this protein is DNA-directed RNA polymerase subunit beta'.